The primary structure comprises 354 residues: Protein NDH-DEPENDENT CYCLIC ELECTRON FLOW 5 (354 aa).

The N-terminal 49 residues, 1–49 (MALVHYMNVSRSTFPLSRSSKINLSSSFASLPLQFHKNIKRLESSVPPS), are a transit peptide targeting the chloroplast.

Its subcellular location is the plastid. It is found in the chloroplast thylakoid membrane. In terms of biological role, required for both formation and activity of the chloroplast NAD(P)H dehydrogenase (NDH) complex of the photosynthetic electron transport chain. May function in assembly or stabilization of the NDH complex. The chain is Protein NDH-DEPENDENT CYCLIC ELECTRON FLOW 5 from Arabidopsis thaliana (Mouse-ear cress).